Reading from the N-terminus, the 65-residue chain is Large ribosomal subunit protein bL35 (65 aa).

This sequence belongs to the bacterial ribosomal protein bL35 family.

In Phytoplasma australiense, this protein is Large ribosomal subunit protein bL35.